The sequence spans 505 residues: Deoxyguanosinetriphosphate triphosphohydrolase (505 aa).

Residues 66 to 273 (RLTHSMEVQQ…MEAADDISYC (208 aa)) form the HD domain.

This sequence belongs to the dGTPase family. Type 1 subfamily. In terms of assembly, homotetramer. It depends on Mg(2+) as a cofactor.

The enzyme catalyses dGTP + H2O = 2'-deoxyguanosine + triphosphate + H(+). DGTPase preferentially hydrolyzes dGTP over the other canonical NTPs. This Serratia proteamaculans (strain 568) protein is Deoxyguanosinetriphosphate triphosphohydrolase.